The chain runs to 383 residues: MKQAFSERISSALTLRKQAGLTRARTVIEQGNQSRLSVDGKSYLNFSGNDYLGLAGSQELTQAWQQGLSLYGSGSGASPLVTGYSKPHADLESQLAEWLGFDCAVLFNSGFSANQAVLFSLLEKGDQVVQDKLNHASLMEAGILSPASMKRFKHNDVAHLDKLLKASICNPSLVVTEGVFSMDGDLSPLSELSRVTKENNAWFMVDDAHGCGVLGSHGRGCCDLYQITPDILVVTFGKAFGLSGAAVLCNVECGDYLSQFARHHVYSTAMPPAQAHALSHALSMIQQQEWRRKKLDELSQQFESELRLCVGVITTQTPIKPIIIGDSETAIALSDSLKEKGMWTTAIRPPTVPLGTARLRVTLSANHSEKDIKLLTQAITELR.

Residue R23 coordinates substrate. 110–111 lines the pyridoxal 5'-phosphate pocket; it reads GF. H135 contributes to the substrate binding site. Residues S181, H209, and T235 each coordinate pyridoxal 5'-phosphate. K238 carries the post-translational modification N6-(pyridoxal phosphate)lysine. Residue T351 participates in substrate binding.

The protein belongs to the class-II pyridoxal-phosphate-dependent aminotransferase family. BioF subfamily. As to quaternary structure, homodimer. Requires pyridoxal 5'-phosphate as cofactor.

It catalyses the reaction 6-carboxyhexanoyl-[ACP] + L-alanine + H(+) = (8S)-8-amino-7-oxononanoate + holo-[ACP] + CO2. Its pathway is cofactor biosynthesis; biotin biosynthesis. Its function is as follows. Catalyzes the decarboxylative condensation of pimeloyl-[acyl-carrier protein] and L-alanine to produce 8-amino-7-oxononanoate (AON), [acyl-carrier protein], and carbon dioxide. In Aliivibrio salmonicida (strain LFI1238) (Vibrio salmonicida (strain LFI1238)), this protein is 8-amino-7-oxononanoate synthase.